The primary structure comprises 374 residues: Glutamate 5-kinase (374 aa).

Residue lysine 17 coordinates ATP. Substrate is bound by residues serine 57, aspartate 144, and asparagine 156. Residues 176-177 (SD) and 218-224 (TGGMVTK) contribute to the ATP site. The PUA domain maps to 280-358 (QGALVLDDGA…RELARELGPA (79 aa)).

Belongs to the glutamate 5-kinase family.

It is found in the cytoplasm. The catalysed reaction is L-glutamate + ATP = L-glutamyl 5-phosphate + ADP. Its pathway is amino-acid biosynthesis; L-proline biosynthesis; L-glutamate 5-semialdehyde from L-glutamate: step 1/2. In terms of biological role, catalyzes the transfer of a phosphate group to glutamate to form L-glutamate 5-phosphate. The chain is Glutamate 5-kinase from Streptomyces coelicolor (strain ATCC BAA-471 / A3(2) / M145).